Here is a 451-residue protein sequence, read N- to C-terminus: tRNA modification GTPase MnmE (451 aa).

3 residues coordinate (6S)-5-formyl-5,6,7,8-tetrahydrofolate: R28, E85, and K124. The region spanning 220-377 is the TrmE-type G domain; that stretch reads GMNVVLVGQP…LRSELLRVAG (158 aa). N230 serves as a coordination point for K(+). Residues 230 to 235, 249 to 255, and 274 to 277 contribute to the GTP site; these read NVGKSS, TDIAGTT, and DTAG. Residue S234 coordinates Mg(2+). Residues T249, I251, and T254 each coordinate K(+). T255 is a Mg(2+) binding site. Residue K451 participates in (6S)-5-formyl-5,6,7,8-tetrahydrofolate binding.

The protein belongs to the TRAFAC class TrmE-Era-EngA-EngB-Septin-like GTPase superfamily. TrmE GTPase family. Homodimer. Heterotetramer of two MnmE and two MnmG subunits. Requires K(+) as cofactor.

It localises to the cytoplasm. In terms of biological role, exhibits a very high intrinsic GTPase hydrolysis rate. Involved in the addition of a carboxymethylaminomethyl (cmnm) group at the wobble position (U34) of certain tRNAs, forming tRNA-cmnm(5)s(2)U34. The protein is tRNA modification GTPase MnmE of Aromatoleum aromaticum (strain DSM 19018 / LMG 30748 / EbN1) (Azoarcus sp. (strain EbN1)).